Consider the following 659-residue polypeptide: Siderophore transporter fer7 (659 aa).

Positions 1–62 (MSNQAQDQPE…ADASSAREGQ (62 aa)) are disordered. Over residues 31–41 (QSVSAHGNTSL) the composition is skewed to polar residues. A glycan (N-linked (GlcNAc...) asparagine) is linked at N38. Over residues 42 to 54 (NKKDRVSAVRDAD) the composition is skewed to basic and acidic residues. 8 consecutive transmembrane segments (helical) span residues 79 to 99 (NSPI…CFAL), 121 to 141 (LFGV…PFIA), 150 to 170 (QTAY…VASA), 208 to 228 (GVVT…GNLI), 245 to 265 (GMFA…LMYV), 316 to 336 (LVGL…FSIY), 348 to 368 (IIAM…WEIL), and 379 to 399 (VWYN…FMGG). N415 carries an N-linked (GlcNAc...) asparagine glycan. 2 helical membrane-spanning segments follow: residues 424–444 (VVNA…GFYL) and 451–471 (KFLQ…YLYG). N475 is a glycosylation site (N-linked (GlcNAc...) asparagine). Helical transmembrane passes span 478–498 (TMVV…SVVG), 528–548 (AIGS…YLAA), and 590–610 (PIFI…LLMP).

This sequence belongs to the major facilitator superfamily.

It is found in the membrane. Its function is as follows. Siderophore transporter; part of the gene cluster that mediates the biosynthesis of siderophore ferrichrome A which is contributing to organismal virulence. The chain is Siderophore transporter fer7 from Mycosarcoma maydis (Corn smut fungus).